The sequence spans 774 residues: Transforming acidic coiled-coil-containing protein 1 (774 aa).

A2 is modified (N-acetylalanine). The interaction with LSM7 and SNRPG stretch occupies residues 2-56; that stretch reads AFSPWQILSPVQWAKWTWSAVRGSGAGEDEAGGPEGDPEEEEDSQAETKSLSFSS. S4, S10, and S45 each carry phosphoserine. The interval 21 to 142 is disordered; sequence AVRGSGAGED…VKDVRGKAEH (122 aa). Over residues 28-46 the composition is skewed to acidic residues; it reads GEDEAGGPEGDPEEEEDSQ. The span at 48 to 61 shows a compositional bias: polar residues; it reads ETKSLSFSSDSEGN. The span at 88–99 shows a compositional bias: basic and acidic residues; it reads PEAKPQESREAD. The segment covering 113–128 has biased composition (polar residues); that stretch reads DTCSRSSENEAPQATV. The span at 131–142 shows a compositional bias: basic and acidic residues; that stretch reads HPVKDVRGKAEH. 2 positions are modified to phosphoserine: S148 and S154. The interval 153–255 is interaction with TDRD7; sequence FSIETRNCTD…PEMLMEGSPL (103 aa). Residues 207–424 form an interaction with YEATS4 region; it reads EAFTEASLKT…NNINTDDSGD (218 aa). The segment at 214 to 428 is disordered; the sequence is LKTGGPCPEP…TDDSGDPCKP (215 aa). SPAZ domains follow at residues 216-294 and 354-504; these read TGGP…TAGV and SKPV…TDEE. The residue at position 228 (S228) is a Phosphoserine; by AURKC. The segment covering 228–241 has biased composition (basic residues); the sequence is SKLRKPKPVSLRKK. Phosphoserine occurs at positions 376 and 401. Residues 397–407 are compositionally biased toward polar residues; it reads ILQNSPPLSSK. Positions 452–468 match the Bipartite nuclear localization signal motif; the sequence is PKKAKSRLITSGCKVKK. 2 positions are modified to phosphoserine: S480 and S560. Residues 579-774 adopt a coiled-coil conformation; it reads IREEIITKEI…ELIAKLGKTD (196 aa). Residues 670 to 774 form an interaction with CH-TOG region; sequence VLEGFKKNEE…ELIAKLGKTD (105 aa).

The protein belongs to the TACC family. In terms of assembly, interacts with CH-TOG and YEATS4. Interacts with the AURKA and AURKB and AURKC. Interacts with LSM7, TDRD7 and SNRPG. Interacts with GCN5L2 and PCAF. Interacts with the thyroid hormone receptors THRB and THRA, predominantly with isoform alpha-2. The interaction with THRA isoform alpha-1 and THRB is decreased in the presence of thyroid hormone T3. Interacts with RARA in the nucleus. Also interacts with other nuclear receptors, including ESR1, NR3C1, PPARG and RXRA, preferentially in the absence of their hormonal ligands.

It is found in the cytoplasm. Its subcellular location is the nucleus. The protein resides in the cytoskeleton. It localises to the microtubule organizing center. The protein localises to the centrosome. It is found in the midbody. Functionally, involved in transcription regulation induced by nuclear receptors, including in T3 thyroid hormone and all-trans retinoic acid pathways. Might promote the nuclear localization of the receptors. Likely involved in the processes that promote cell division prior to the formation of differentiated tissues. The sequence is that of Transforming acidic coiled-coil-containing protein 1 (Tacc1) from Mus musculus (Mouse).